The primary structure comprises 216 residues: MOB kinase activator 3B (216 aa).

4 residues coordinate Zn(2+): Cys-82, Cys-87, His-164, and His-169.

Functionally, modulates LATS1 expression in the Hippo signaling pathway which plays a pivotal role in organ size control and tumor suppression by restricting proliferation and promoting apoptosis. This Mus musculus (Mouse) protein is MOB kinase activator 3B (Mob3b).